The following is a 363-amino-acid chain: Flagellar P-ring protein (363 aa).

Residues 1 to 20 (MKIKVLLAVALLAMTVPVKA) form the signal peptide.

It belongs to the FlgI family. In terms of assembly, the basal body constitutes a major portion of the flagellar organelle and consists of four rings (L,P,S, and M) mounted on a central rod.

Its subcellular location is the periplasm. The protein localises to the bacterial flagellum basal body. Its function is as follows. Assembles around the rod to form the L-ring and probably protects the motor/basal body from shearing forces during rotation. This is Flagellar P-ring protein from Shewanella amazonensis (strain ATCC BAA-1098 / SB2B).